Consider the following 396-residue polypeptide: Tryptophan synthase beta chain (396 aa).

N6-(pyridoxal phosphate)lysine is present on K86.

The protein belongs to the TrpB family. Tetramer of two alpha and two beta chains. Pyridoxal 5'-phosphate is required as a cofactor.

The enzyme catalyses (1S,2R)-1-C-(indol-3-yl)glycerol 3-phosphate + L-serine = D-glyceraldehyde 3-phosphate + L-tryptophan + H2O. The protein operates within amino-acid biosynthesis; L-tryptophan biosynthesis; L-tryptophan from chorismate: step 5/5. The beta subunit is responsible for the synthesis of L-tryptophan from indole and L-serine. This chain is Tryptophan synthase beta chain, found in Vibrio cholerae serotype O1 (strain ATCC 39315 / El Tor Inaba N16961).